The sequence spans 385 residues: Eukaryotic translation initiation factor 3 subunit M (385 aa).

Positions 180-342 (NSELASKVMI…RKVHISSTMH (163 aa)) constitute a PCI domain.

This sequence belongs to the eIF-3 subunit M family. As to quaternary structure, component of the eukaryotic translation initiation factor 3 (eIF-3) complex.

Its subcellular location is the cytoplasm. Its function is as follows. Component of the eukaryotic translation initiation factor 3 (eIF-3) complex, which is involved in protein synthesis of a specialized repertoire of mRNAs and, together with other initiation factors, stimulates binding of mRNA and methionyl-tRNAi to the 40S ribosome. The eIF-3 complex specifically targets and initiates translation of a subset of mRNAs involved in cell proliferation. The chain is Eukaryotic translation initiation factor 3 subunit M from Anopheles gambiae (African malaria mosquito).